Consider the following 216-residue polypeptide: LexA repressor (216 aa).

The segment at residues 28 to 48 (RAEIAAELGFSSANSAEEHLR) is a DNA-binding region (H-T-H motif). Active-site for autocatalytic cleavage activity residues include Ser-134 and Lys-171.

Belongs to the peptidase S24 family. As to quaternary structure, homodimer.

The catalysed reaction is Hydrolysis of Ala-|-Gly bond in repressor LexA.. Functionally, represses a number of genes involved in the response to DNA damage (SOS response), including recA and lexA. In the presence of single-stranded DNA, RecA interacts with LexA causing an autocatalytic cleavage which disrupts the DNA-binding part of LexA, leading to derepression of the SOS regulon and eventually DNA repair. This is LexA repressor from Paraburkholderia phytofirmans (strain DSM 17436 / LMG 22146 / PsJN) (Burkholderia phytofirmans).